The sequence spans 420 residues: UDP-N-acetylglucosamine 1-carboxyvinyltransferase (420 aa).

22-23 contacts phosphoenolpyruvate; sequence KN. A UDP-N-acetyl-alpha-D-glucosamine-binding site is contributed by R92. The active-site Proton donor is the C116. C116 is modified (2-(S-cysteinyl)pyruvic acid O-phosphothioketal). UDP-N-acetyl-alpha-D-glucosamine contacts are provided by residues 121-125, D307, and L329; that span reads RPIDL.

This sequence belongs to the EPSP synthase family. MurA subfamily.

The protein localises to the cytoplasm. The enzyme catalyses phosphoenolpyruvate + UDP-N-acetyl-alpha-D-glucosamine = UDP-N-acetyl-3-O-(1-carboxyvinyl)-alpha-D-glucosamine + phosphate. It functions in the pathway cell wall biogenesis; peptidoglycan biosynthesis. Cell wall formation. Adds enolpyruvyl to UDP-N-acetylglucosamine. This is UDP-N-acetylglucosamine 1-carboxyvinyltransferase from Nitratiruptor sp. (strain SB155-2).